We begin with the raw amino-acid sequence, 266 residues long: Large ribosomal subunit protein uL2m (266 aa).

Belongs to the universal ribosomal protein uL2 family.

The protein localises to the mitochondrion. In Dictyostelium citrinum (Slime mold), this protein is Large ribosomal subunit protein uL2m (mrpl2).